The following is a 78-amino-acid chain: UPF0270 protein YPTB3725 (78 aa).

Belongs to the UPF0270 family.

The chain is UPF0270 protein YPTB3725 from Yersinia pseudotuberculosis serotype I (strain IP32953).